The primary structure comprises 528 residues: 2-isopropylmalate synthase (528 aa).

The region spanning 12–279 is the Pyruvate carboxyltransferase domain; sequence IRIFDTTLRD…DSSINTPRIV (268 aa). The Mn(2+) site is built by aspartate 21, histidine 214, histidine 216, and asparagine 250. A regulatory domain region spans residues 401 to 528; sequence RLASMTISDV…STDVPTPATA (128 aa).

Belongs to the alpha-IPM synthase/homocitrate synthase family. LeuA type 1 subfamily. In terms of assembly, homodimer. The cofactor is Mn(2+).

The protein localises to the cytoplasm. It catalyses the reaction 3-methyl-2-oxobutanoate + acetyl-CoA + H2O = (2S)-2-isopropylmalate + CoA + H(+). It functions in the pathway amino-acid biosynthesis; L-leucine biosynthesis; L-leucine from 3-methyl-2-oxobutanoate: step 1/4. Functionally, catalyzes the condensation of the acetyl group of acetyl-CoA with 3-methyl-2-oxobutanoate (2-ketoisovalerate) to form 3-carboxy-3-hydroxy-4-methylpentanoate (2-isopropylmalate). In Stenotrophomonas maltophilia (strain K279a), this protein is 2-isopropylmalate synthase.